We begin with the raw amino-acid sequence, 97 residues long: MKIRPLHDRVIVKRKEVESKSAGGIVLTGTAAGKSTRGEVLAVGNGRILDNGEIKPLDVKVGDVVIFNDGYGVKAEKIDNEEVLIMSESDILAIVEA.

Belongs to the GroES chaperonin family. Heptamer of 7 subunits arranged in a ring. Interacts with the chaperonin GroEL.

The protein localises to the cytoplasm. Its function is as follows. Together with the chaperonin GroEL, plays an essential role in assisting protein folding. The GroEL-GroES system forms a nano-cage that allows encapsulation of the non-native substrate proteins and provides a physical environment optimized to promote and accelerate protein folding. GroES binds to the apical surface of the GroEL ring, thereby capping the opening of the GroEL channel. The chain is Co-chaperonin GroES from Yersinia pseudotuberculosis serotype O:1b (strain IP 31758).